The sequence spans 386 residues: S-adenosylmethionine synthase (386 aa).

ATP is bound at residue H17. Residue D19 participates in Mg(2+) binding. Position 45 (E45) interacts with K(+). L-methionine-binding residues include E58 and Q101. A flexible loop region spans residues 101 to 111 (QSPDISQGVTE). ATP contacts are provided by residues 168 to 170 (DAK), D242, 248 to 249 (RK), A265, and K269. D242 is an L-methionine binding site. Residue K273 participates in L-methionine binding.

The protein belongs to the AdoMet synthase family. Homotetramer; dimer of dimers. The cofactor is Mg(2+). Requires K(+) as cofactor.

The protein localises to the cytoplasm. The catalysed reaction is L-methionine + ATP + H2O = S-adenosyl-L-methionine + phosphate + diphosphate. Its pathway is amino-acid biosynthesis; S-adenosyl-L-methionine biosynthesis; S-adenosyl-L-methionine from L-methionine: step 1/1. Its function is as follows. Catalyzes the formation of S-adenosylmethionine (AdoMet) from methionine and ATP. The overall synthetic reaction is composed of two sequential steps, AdoMet formation and the subsequent tripolyphosphate hydrolysis which occurs prior to release of AdoMet from the enzyme. This is S-adenosylmethionine synthase from Leptospira interrogans serogroup Icterohaemorrhagiae serovar copenhageni (strain Fiocruz L1-130).